The following is a 553-amino-acid chain: CTP synthase (553 aa).

Residues M1 to L270 are amidoligase domain. S13 contacts CTP. UTP is bound at residue S13. ATP is bound by residues S14–I19 and D71. Mg(2+) contacts are provided by D71 and E144. CTP-binding positions include D151–E153, K191–Q196, and K227. UTP contacts are provided by residues K191–Q196 and K227. The Glutamine amidotransferase type-1 domain maps to T295–A547. G356 lines the L-glutamine pocket. C383 serves as the catalytic Nucleophile; for glutamine hydrolysis. L-glutamine contacts are provided by residues L384 to Q387, E407, and R473. Catalysis depends on residues H520 and E522.

This sequence belongs to the CTP synthase family. Homotetramer.

It catalyses the reaction UTP + L-glutamine + ATP + H2O = CTP + L-glutamate + ADP + phosphate + 2 H(+). The catalysed reaction is L-glutamine + H2O = L-glutamate + NH4(+). The enzyme catalyses UTP + NH4(+) + ATP = CTP + ADP + phosphate + 2 H(+). It participates in pyrimidine metabolism; CTP biosynthesis via de novo pathway; CTP from UDP: step 2/2. Its activity is regulated as follows. Allosterically activated by GTP, when glutamine is the substrate; GTP has no effect on the reaction when ammonia is the substrate. The allosteric effector GTP functions by stabilizing the protein conformation that binds the tetrahedral intermediate(s) formed during glutamine hydrolysis. Inhibited by the product CTP, via allosteric rather than competitive inhibition. Catalyzes the ATP-dependent amination of UTP to CTP with either L-glutamine or ammonia as the source of nitrogen. Regulates intracellular CTP levels through interactions with the four ribonucleotide triphosphates. The chain is CTP synthase from Paraburkholderia phymatum (strain DSM 17167 / CIP 108236 / LMG 21445 / STM815) (Burkholderia phymatum).